The following is a 220-amino-acid chain: Uracil-DNA glycosylase (220 aa).

Residue Asp65 is the Proton acceptor of the active site.

This sequence belongs to the uracil-DNA glycosylase (UDG) superfamily. UNG family.

It localises to the cytoplasm. The catalysed reaction is Hydrolyzes single-stranded DNA or mismatched double-stranded DNA and polynucleotides, releasing free uracil.. Its function is as follows. Excises uracil residues from the DNA which can arise as a result of misincorporation of dUMP residues by DNA polymerase or due to deamination of cytosine. The chain is Uracil-DNA glycosylase from Leuconostoc mesenteroides subsp. mesenteroides (strain ATCC 8293 / DSM 20343 / BCRC 11652 / CCM 1803 / JCM 6124 / NCDO 523 / NBRC 100496 / NCIMB 8023 / NCTC 12954 / NRRL B-1118 / 37Y).